We begin with the raw amino-acid sequence, 365 residues long: Phospho-N-acetylmuramoyl-pentapeptide-transferase (365 aa).

11 helical membrane-spanning segments follow: residues 15–35 (WPAA…DRLI), 39–59 (LLSL…WWGV), 84–104 (GTPT…GGLV), 114–134 (LLAI…DDWS), 156–176 (AAVL…TVSL), 178–198 (FNLD…VFLA), 209–229 (LDGL…LQLM), 235–255 (GDPA…GFLI), 263–283 (VFMG…VALL), 291–311 (LLMG…VWVF), and 343–363 (VVVP…LGLH).

It belongs to the glycosyltransferase 4 family. MraY subfamily. Requires Mg(2+) as cofactor.

It is found in the cell inner membrane. It carries out the reaction UDP-N-acetyl-alpha-D-muramoyl-L-alanyl-gamma-D-glutamyl-meso-2,6-diaminopimeloyl-D-alanyl-D-alanine + di-trans,octa-cis-undecaprenyl phosphate = di-trans,octa-cis-undecaprenyl diphospho-N-acetyl-alpha-D-muramoyl-L-alanyl-D-glutamyl-meso-2,6-diaminopimeloyl-D-alanyl-D-alanine + UMP. The protein operates within cell wall biogenesis; peptidoglycan biosynthesis. Functionally, catalyzes the initial step of the lipid cycle reactions in the biosynthesis of the cell wall peptidoglycan: transfers peptidoglycan precursor phospho-MurNAc-pentapeptide from UDP-MurNAc-pentapeptide onto the lipid carrier undecaprenyl phosphate, yielding undecaprenyl-pyrophosphoryl-MurNAc-pentapeptide, known as lipid I. The chain is Phospho-N-acetylmuramoyl-pentapeptide-transferase from Synechococcus sp. (strain WH7803).